We begin with the raw amino-acid sequence, 1554 residues long: Myosin-2 (1554 aa).

Positions 4–57 constitute a Myosin N-terminal SH3-like domain; it reads EVGTRCWYPDKQQGWIGGEITKHTNLSNKHQLELTLEDNQIVEIESETLDETKD. Residues 70–774 enclose the Myosin motor domain; sequence EATEDLTSLS…MLAYLEKLRS (705 aa). Residue 164 to 171 participates in ATP binding; it reads GESGAGKT. An actin-binding region spans residues 443-523; it reads FIGVLDIYGF…LGILSLLDEE (81 aa). IQ domains are found at residues 778 to 798, 800 to 824, 825 to 847, 848 to 872, 873 to 895, and 896 to 925; these read HNSSVLIQKKVKAVYYRKKYL, IISSIRNFHSRSEGFLTRQRVDLEF, KTQAAILIQSMVRSTSTRNKTIS, LLSAITRLQSLVRKQLAQKELLQRR, QRDAAVSIQKKIRAFEPRQSFNT, and TRRSTVVVQSLVRKKFAQKKLKDLKTEAKS. Residues 926–1079 are a coiled coil; sequence VNHLKEVSYK…IARLQAAVRS (154 aa). The tract at residues 1080-1554 is non alpha-helical, tail domain; the sequence is GVTSSTITST…VTVQESQRTE (475 aa). The segment covering 1082–1093 has biased composition (low complexity); that stretch reads TSSTITSTPTAS. The interval 1082–1109 is disordered; that stretch reads TSSTITSTPTASRRFSAHSSVADGTSPR. Positions 1098–1109 are enriched in polar residues; sequence AHSSVADGTSPR. The Dilute domain occupies 1205–1480; the sequence is AEVLSTIQKL…LNFVADRVKK (276 aa).

This sequence belongs to the TRAFAC class myosin-kinesin ATPase superfamily. Myosin family. Homodimer. Interacts with calmodulin (CMD1) and the myosin light chain MLC1 through its IQ repeats.

Functionally, myosin heavy chain that is required for the cell cycle-regulated transport of various organelles and proteins for their segregation. Functions by binding with its tail domain to receptor proteins on organelles and exerting force with its N-terminal motor domain against actin filaments, thereby transporting its cargo along polarized actin cables. This Lachancea kluyveri (strain ATCC 58438 / CBS 3082 / BCRC 21498 / NBRC 1685 / JCM 7257 / NCYC 543 / NRRL Y-12651) (Yeast) protein is Myosin-2 (MYO2).